A 645-amino-acid polypeptide reads, in one-letter code: Chaperone protein DnaK (645 aa).

A Phosphothreonine; by autocatalysis modification is found at Thr-199. Disordered regions lie at residues 509 to 530 (GALS…AEED) and 615 to 645 (EAGA…EVKE). Positions 518 to 530 (QMQKDAEANAEED) are enriched in basic and acidic residues. Over residues 615–626 (EAGADAAGAAGA) the composition is skewed to low complexity. Residues 631 to 645 (GDDDDAIDAEFEVKE) show a composition bias toward acidic residues.

Belongs to the heat shock protein 70 family.

In terms of biological role, acts as a chaperone. In Rhodopirellula baltica (strain DSM 10527 / NCIMB 13988 / SH1), this protein is Chaperone protein DnaK.